Consider the following 209-residue polypeptide: Thymidylate kinase (209 aa).

10–17 (GPDGAGKT) is a binding site for ATP.

It belongs to the thymidylate kinase family.

The catalysed reaction is dTMP + ATP = dTDP + ADP. Its function is as follows. Phosphorylation of dTMP to form dTDP in both de novo and salvage pathways of dTTP synthesis. This is Thymidylate kinase from Pediococcus pentosaceus (strain ATCC 25745 / CCUG 21536 / LMG 10740 / 183-1w).